A 365-amino-acid polypeptide reads, in one-letter code: Class I histocompatibility antigen, Gogo-A*0101 alpha chain (365 aa).

The N-terminal stretch at 1–24 (MAVMAPRTLVLLLSGALALTQTWA) is a signal peptide. Residues 25-114 (GSHSMRYFST…LRGYYNQSED (90 aa)) are alpha-1. The Extracellular segment spans residues 25 to 308 (GSHSMRYFST…EPSSQPTIPI (284 aa)). An N-linked (GlcNAc...) asparagine glycan is attached at Asn110. The alpha-2 stretch occupies residues 115-206 (GSHTIQRMYG…ENGKETLQRT (92 aa)). 2 disulfides stabilise this stretch: Cys125–Cys188 and Cys227–Cys283. Residues 207–298 (DAPKTHMTHH…GLPEPLTLRW (92 aa)) form an alpha-3 region. The region spanning 209–297 (PKTHMTHHAV…EGLPEPLTLR (89 aa)) is the Ig-like C1-type domain. The tract at residues 299–308 (EPSSQPTIPI) is connecting peptide. A helical transmembrane segment spans residues 309-332 (VGIIAGLVLFGAVIAGAVVAAVRW). Residues 333–365 (RRKSSDRKGGSYSQAASSDSAQGSDVSLTACKV) are Cytoplasmic-facing. Positions 338–365 (DRKGGSYSQAASSDSAQGSDVSLTACKV) are disordered. Residues 342–359 (GSYSQAASSDSAQGSDVS) are compositionally biased toward low complexity. Ser343 carries the post-translational modification Phosphoserine. Tyr344 is modified (phosphotyrosine). Ser345, Ser349, Ser350, Ser352, Ser356, and Ser359 each carry phosphoserine.

This sequence belongs to the MHC class I family. As to quaternary structure, heterodimer of an alpha chain and a beta chain (beta-2-microglobulin).

The protein resides in the membrane. Involved in the presentation of foreign antigens to the immune system. The chain is Class I histocompatibility antigen, Gogo-A*0101 alpha chain from Gorilla gorilla gorilla (Western lowland gorilla).